Here is a 149-residue protein sequence, read N- to C-terminus: Ribonuclease H (149 aa).

The region spanning 4–145 is the RNase H type-1 domain; that stretch reads QRGVVEAFTD…ADALANQGID (142 aa). Mg(2+) is bound by residues aspartate 13, glutamate 51, aspartate 73, and aspartate 137.

Belongs to the RNase H family. In terms of assembly, monomer. Mg(2+) serves as cofactor.

It is found in the cytoplasm. It carries out the reaction Endonucleolytic cleavage to 5'-phosphomonoester.. Its function is as follows. Endonuclease that specifically degrades the RNA of RNA-DNA hybrids. The protein is Ribonuclease H of Halorhodospira halophila (strain DSM 244 / SL1) (Ectothiorhodospira halophila (strain DSM 244 / SL1)).